Here is a 133-residue protein sequence, read N- to C-terminus: Profilin (133 aa).

This sequence belongs to the profilin family.

In terms of biological role, more likely to influence phosphoinositide metabolism than actin assembly. The sequence is that of Profilin from Cowpox virus (strain GRI-90 / Grishak) (CPV).